The chain runs to 201 residues: Guanylate kinase (201 aa).

Residues 2-180 (SCLFVISAPS…AARDVASIVQ (179 aa)) enclose the Guanylate kinase-like domain. 9 to 16 (APSGAGKT) provides a ligand contact to ATP.

Belongs to the guanylate kinase family.

The protein resides in the cytoplasm. It catalyses the reaction GMP + ATP = GDP + ADP. Its function is as follows. Essential for recycling GMP and indirectly, cGMP. The polypeptide is Guanylate kinase (Nitrosomonas europaea (strain ATCC 19718 / CIP 103999 / KCTC 2705 / NBRC 14298)).